We begin with the raw amino-acid sequence, 256 residues long: Hydroxyacylglutathione hydrolase (256 aa).

Zn(2+) contacts are provided by H57, H59, D61, H62, H115, D134, and H172.

This sequence belongs to the metallo-beta-lactamase superfamily. Glyoxalase II family. Monomer. Requires Zn(2+) as cofactor.

The enzyme catalyses an S-(2-hydroxyacyl)glutathione + H2O = a 2-hydroxy carboxylate + glutathione + H(+). It participates in secondary metabolite metabolism; methylglyoxal degradation; (R)-lactate from methylglyoxal: step 2/2. Functionally, thiolesterase that catalyzes the hydrolysis of S-D-lactoyl-glutathione to form glutathione and D-lactic acid. The polypeptide is Hydroxyacylglutathione hydrolase (Maricaulis maris (strain MCS10) (Caulobacter maris)).